A 302-amino-acid chain; its full sequence is L-glutamate/L-aspartate-binding protein (302 aa).

An N-terminal signal peptide occupies residues 1–23 (MRIAPSLLSTAIVAALLSAPVVA).

The protein belongs to the bacterial solute-binding protein 3 family.

Its subcellular location is the periplasm. Binds L-glutamate and L-aspartate. This is L-glutamate/L-aspartate-binding protein from Pseudomonas aeruginosa (strain ATCC 15692 / DSM 22644 / CIP 104116 / JCM 14847 / LMG 12228 / 1C / PRS 101 / PAO1).